The sequence spans 219 residues: Probable nicotinate-nucleotide adenylyltransferase (219 aa).

The protein belongs to the NadD family.

The enzyme catalyses nicotinate beta-D-ribonucleotide + ATP + H(+) = deamido-NAD(+) + diphosphate. It functions in the pathway cofactor biosynthesis; NAD(+) biosynthesis; deamido-NAD(+) from nicotinate D-ribonucleotide: step 1/1. Its function is as follows. Catalyzes the reversible adenylation of nicotinate mononucleotide (NaMN) to nicotinic acid adenine dinucleotide (NaAD). The sequence is that of Probable nicotinate-nucleotide adenylyltransferase from Pseudomonas putida (strain GB-1).